Reading from the N-terminus, the 269-residue chain is uncharacterized protein (269 aa).

Positions 1-12 are enriched in basic residues; the sequence is MSKRTNNKKRKH. Residues 1–82 are disordered; sequence MSKRTNNKKR…KKKENGNENV (82 aa). Over residues 21–33 the composition is skewed to acidic residues; the sequence is PENQDENQDEEFL. Residues 34–63 are compositionally biased toward basic and acidic residues; sequence EDKNKDKNQNKNKDKNKNKDMNKNKNKDMN.

This is an uncharacterized protein from Dictyostelium discoideum (Social amoeba).